We begin with the raw amino-acid sequence, 512 residues long: Polyamine oxidase 1 (512 aa).

2 residues coordinate FAD: glutamate 38 and arginine 46. The segment at 448–470 is disordered; the sequence is DRMAEPLPRGPDAAADERPPSPR. Glutamate 476 is an FAD binding site.

This sequence belongs to the flavin monoamine oxidase family. FAD serves as cofactor.

Its subcellular location is the cytoplasm. It catalyses the reaction spermine + O2 + H2O = 3-aminopropanal + spermidine + H2O2. The catalysed reaction is N(1)-acetylspermine + O2 + H2O = 3-acetamidopropanal + spermidine + H2O2. The enzyme catalyses norspermine + O2 + H2O = norspermidine + 3-aminopropanal + H2O2. It carries out the reaction thermospermine + O2 + H2O = 3-aminopropanal + spermidine + H2O2. The protein operates within amine and polyamine degradation; spermine degradation. Its function is as follows. Flavoenzyme involved in polyamine back-conversion. Catalyzes the oxidation of the secondary amino group of polyamines, such as spermine and its acetyl derivatives. Substrate preference is thermospermine &gt; spermine &gt; norspermine &gt; N(1)-acetylspermine. No activity detected when putrescine or spermidine are used as substrates. Plays an important role in the regulation of polyamine intracellular concentration. The chain is Polyamine oxidase 1 from Oryza sativa subsp. japonica (Rice).